A 362-amino-acid chain; its full sequence is MRVADFSFELPESLIAHYPQPQRSGCRLLSLDGPTGALTHGIFTDLLDKLVPGDLLVFNNTRVIPARLFGRKASGGKLEVLVERVLDDHRVLAHVKASKAPKPGTELLLGDDESIHATMLARHDTLFELRFDDERDVFTILDAVGHMPLPPYIDRPDEDADRELYQTVYSQRLGAVAAPTAGLHFDEPMLAALREKGIEMAFVTLHVGAGTFQPVRVETIEDHIMHSEYAEVPQEVVDAVLACKARGNRVVAVGTTSVRSLESAAKSSDNGLIAPFFGDTKIFIYPGYHYQVVDALITNFHLPESTLIMLVSAFAGYKNTMNAYQQAVAEQYRFFSYGDAMFISRNPQASTEMISLNSTDNQ.

It belongs to the QueA family. Monomer.

The protein localises to the cytoplasm. The catalysed reaction is 7-aminomethyl-7-carbaguanosine(34) in tRNA + S-adenosyl-L-methionine = epoxyqueuosine(34) in tRNA + adenine + L-methionine + 2 H(+). Its pathway is tRNA modification; tRNA-queuosine biosynthesis. In terms of biological role, transfers and isomerizes the ribose moiety from AdoMet to the 7-aminomethyl group of 7-deazaguanine (preQ1-tRNA) to give epoxyqueuosine (oQ-tRNA). In Yersinia enterocolitica serotype O:8 / biotype 1B (strain NCTC 13174 / 8081), this protein is S-adenosylmethionine:tRNA ribosyltransferase-isomerase.